We begin with the raw amino-acid sequence, 78 residues long: D-alanyl carrier protein (78 aa).

The 78-residue stretch at 1 to 78 (MAFRENVLEI…MIITQLEALK (78 aa)) folds into the Carrier domain. S36 is subject to O-(pantetheine 4'-phosphoryl)serine.

It belongs to the DltC family. 4'-phosphopantetheine is transferred from CoA to a specific serine of apo-DCP.

It localises to the cytoplasm. Its pathway is cell wall biogenesis; lipoteichoic acid biosynthesis. Its function is as follows. Carrier protein involved in the D-alanylation of lipoteichoic acid (LTA). The loading of thioester-linked D-alanine onto DltC is catalyzed by D-alanine--D-alanyl carrier protein ligase DltA. The DltC-carried D-alanyl group is further transferred to cell membrane phosphatidylglycerol (PG) by forming an ester bond, probably catalyzed by DltD. D-alanylation of LTA plays an important role in modulating the properties of the cell wall in Gram-positive bacteria, influencing the net charge of the cell wall. This Listeria monocytogenes serotype 4b (strain CLIP80459) protein is D-alanyl carrier protein.